The following is a 153-amino-acid chain: 6,7-dimethyl-8-ribityllumazine synthase (153 aa).

5-amino-6-(D-ribitylamino)uracil-binding positions include Trp-22, 56-58 (SYE), and 80-82 (AVI). 85–86 (AT) lines the (2S)-2-hydroxy-3-oxobutyl phosphate pocket. Residue His-88 is the Proton donor of the active site. Residue Leu-113 participates in 5-amino-6-(D-ribitylamino)uracil binding. Arg-127 provides a ligand contact to (2S)-2-hydroxy-3-oxobutyl phosphate.

This sequence belongs to the DMRL synthase family.

It catalyses the reaction (2S)-2-hydroxy-3-oxobutyl phosphate + 5-amino-6-(D-ribitylamino)uracil = 6,7-dimethyl-8-(1-D-ribityl)lumazine + phosphate + 2 H2O + H(+). It participates in cofactor biosynthesis; riboflavin biosynthesis; riboflavin from 2-hydroxy-3-oxobutyl phosphate and 5-amino-6-(D-ribitylamino)uracil: step 1/2. Its function is as follows. Catalyzes the formation of 6,7-dimethyl-8-ribityllumazine by condensation of 5-amino-6-(D-ribitylamino)uracil with 3,4-dihydroxy-2-butanone 4-phosphate. This is the penultimate step in the biosynthesis of riboflavin. The chain is 6,7-dimethyl-8-ribityllumazine synthase from Herpetosiphon aurantiacus (strain ATCC 23779 / DSM 785 / 114-95).